The chain runs to 453 residues: tRNA modification GTPase MnmE (453 aa).

(6S)-5-formyl-5,6,7,8-tetrahydrofolate-binding residues include R22, E79, and K119. The TrmE-type G domain maps to 215–376 (GMKVVIAGRP…LRNHLKECMG (162 aa)). N225 is a binding site for K(+). GTP-binding positions include 225–230 (NAGKSS), 244–250 (TDIAGTT), 269–272 (DTAG), and 334–337 (NKAD). S229 is a Mg(2+) binding site. Residues T244, I246, and T249 each contribute to the K(+) site. Mg(2+) is bound at residue T250. Residue K453 participates in (6S)-5-formyl-5,6,7,8-tetrahydrofolate binding.

Belongs to the TRAFAC class TrmE-Era-EngA-EngB-Septin-like GTPase superfamily. TrmE GTPase family. As to quaternary structure, homodimer. Heterotetramer of two MnmE and two MnmG subunits. Requires K(+) as cofactor.

It localises to the cytoplasm. In terms of biological role, exhibits a very high intrinsic GTPase hydrolysis rate. Involved in the addition of a carboxymethylaminomethyl (cmnm) group at the wobble position (U34) of certain tRNAs, forming tRNA-cmnm(5)s(2)U34. This chain is tRNA modification GTPase MnmE, found in Vibrio vulnificus (strain CMCP6).